We begin with the raw amino-acid sequence, 120 residues long: uncharacterized protein (120 aa).

Residues Asn-29 and Asn-68 are each glycosylated (N-linked (GlcNAc...) asparagine; by host). A helical transmembrane segment spans residues 74–94; that stretch reads IFNGLGFILIVIFIYLLIITL.

This sequence belongs to the asfivirus B117L family.

The protein localises to the host membrane. It localises to the virion. This is an uncharacterized protein from Ornithodoros (relapsing fever ticks).